The primary structure comprises 138 residues: Acidic phospholipase A2 inhibitor vaspin A chain (138 aa).

Residues 1–16 (MRTLWIVAVCLIGVEG) form the signal peptide. Disulfide bonds link Cys42–Cys131, Cys44–Cys60, Cys59–Cys111, Cys65–Cys138, Cys66–Cys104, Cys73–Cys97, and Cys91–Cys102.

Belongs to the phospholipase A2 family. Group II subfamily. D49 sub-subfamily. Heterodimer of a toxic basic protein having phospholipase A2 activity (B chain (AC Q8JFG0)) and a non-toxic acidic protein functioning as its inhibitor (A chain). Expressed by the venom gland.

It is found in the secreted. In terms of biological role, heterodimer: postsynaptic neurotoxin. Functionally, monomer: the acidic chain inhibits the basic phospholipase A2 of the complex. The sequence is that of Acidic phospholipase A2 inhibitor vaspin A chain from Vipera aspis aspis (Aspic viper).